The following is a 228-amino-acid chain: MRILVVDDDRAVRESLRRSLSFNGYSVELAHDGVEALDMIASDRPDALVLDVMMPRLDGLEVCRQLRSTGDDLPILVLTARDSVSERVAGLDAGADDYLPKPFALEELLARMRALLRRTKPEDDAESVAMTFSDLTLDPVTREVTRGQRRISLTRTEFALLEMLIANPRRVLTRSRILEEVWGFDFPTSGNALEVYVGYLRRKTEADGEPRLIHTVRGVGYVLRETPP.

The Response regulatory domain occupies R2–L116. 4-aspartylphosphate is present on D46. A DNA-binding region (ompR/PhoB-type) is located at residues S127–E225.

Post-translationally, phosphorylated and dephosphorylated by MprB.

Its subcellular location is the cytoplasm. Member of the two-component regulatory system MprB/MprA which contributes to maintaining a balance among several systems involved in stress resistance and is required for establishment and maintenance of persistent infection in the host. Functions as a transcriptional regulator that recognizes a 19-bp nucleotide motif comprizing two loosely conserved 8-bp direct DNA-binding motif repeats separated by a 3-bp spacer region. The chain is Response regulator MprA (mprA) from Mycobacterium avium (strain 104).